The primary structure comprises 264 residues: Thymidylate synthase (264 aa).

Arginine 21 contributes to the dUMP binding site. A (6R)-5,10-methylene-5,6,7,8-tetrahydrofolate-binding site is contributed by histidine 51. 126–127 (RR) serves as a coordination point for dUMP. Residue cysteine 146 is the Nucleophile of the active site. DUMP is bound by residues 166-169 (RSCD), asparagine 177, and 207-209 (HLY). Position 169 (aspartate 169) interacts with (6R)-5,10-methylene-5,6,7,8-tetrahydrofolate. Serine 263 is a (6R)-5,10-methylene-5,6,7,8-tetrahydrofolate binding site.

Belongs to the thymidylate synthase family. Bacterial-type ThyA subfamily. Homodimer.

It localises to the cytoplasm. The catalysed reaction is dUMP + (6R)-5,10-methylene-5,6,7,8-tetrahydrofolate = 7,8-dihydrofolate + dTMP. It functions in the pathway pyrimidine metabolism; dTTP biosynthesis. Functionally, catalyzes the reductive methylation of 2'-deoxyuridine-5'-monophosphate (dUMP) to 2'-deoxythymidine-5'-monophosphate (dTMP) while utilizing 5,10-methylenetetrahydrofolate (mTHF) as the methyl donor and reductant in the reaction, yielding dihydrofolate (DHF) as a by-product. This enzymatic reaction provides an intracellular de novo source of dTMP, an essential precursor for DNA biosynthesis. In Wigglesworthia glossinidia brevipalpis, this protein is Thymidylate synthase.